We begin with the raw amino-acid sequence, 734 residues long: Polyribonucleotide nucleotidyltransferase (734 aa).

2 residues coordinate Mg(2+): Asp-505 and Asp-511. The 60-residue stretch at 572-631 folds into the KH domain; that stretch reads PKLTTIQIPVDAIGMVIGKGGETIRSITEETGAEINIEDDGTVTIASASGEGASAALETI. One can recognise an S1 motif domain in the interval 641 to 715; the sequence is GTVYSGKVRD…GKTRFALSIK (75 aa).

It belongs to the polyribonucleotide nucleotidyltransferase family. Requires Mg(2+) as cofactor.

The protein localises to the cytoplasm. The catalysed reaction is RNA(n+1) + phosphate = RNA(n) + a ribonucleoside 5'-diphosphate. Functionally, involved in mRNA degradation. Catalyzes the phosphorolysis of single-stranded polyribonucleotides processively in the 3'- to 5'-direction. The chain is Polyribonucleotide nucleotidyltransferase from Prosthecochloris aestuarii (strain DSM 271 / SK 413).